We begin with the raw amino-acid sequence, 183 residues long: NAD(P)H-quinone oxidoreductase subunit I, chloroplastic (183 aa).

4Fe-4S ferredoxin-type domains are found at residues 55–84 and 95–124; these read GRIHFEFDKCIACEVCVRVCPINLPVVDWK and KSYSIDFGVCIFCGNCVEYCPTNCLSMTEE. [4Fe-4S] cluster is bound by residues cysteine 64, cysteine 67, cysteine 70, cysteine 74, cysteine 104, cysteine 107, cysteine 110, and cysteine 114.

It belongs to the complex I 23 kDa subunit family. In terms of assembly, NDH is composed of at least 16 different subunits, 5 of which are encoded in the nucleus. The cofactor is [4Fe-4S] cluster.

The protein resides in the plastid. It localises to the chloroplast thylakoid membrane. It catalyses the reaction a plastoquinone + NADH + (n+1) H(+)(in) = a plastoquinol + NAD(+) + n H(+)(out). The catalysed reaction is a plastoquinone + NADPH + (n+1) H(+)(in) = a plastoquinol + NADP(+) + n H(+)(out). NDH shuttles electrons from NAD(P)H:plastoquinone, via FMN and iron-sulfur (Fe-S) centers, to quinones in the photosynthetic chain and possibly in a chloroplast respiratory chain. The immediate electron acceptor for the enzyme in this species is believed to be plastoquinone. Couples the redox reaction to proton translocation, and thus conserves the redox energy in a proton gradient. This chain is NAD(P)H-quinone oxidoreductase subunit I, chloroplastic, found in Anthoceros angustus (Hornwort).